Reading from the N-terminus, the 88-residue chain is Small ribosomal subunit protein uS17 (88 aa).

It belongs to the universal ribosomal protein uS17 family. Part of the 30S ribosomal subunit.

In terms of biological role, one of the primary rRNA binding proteins, it binds specifically to the 5'-end of 16S ribosomal RNA. The chain is Small ribosomal subunit protein uS17 from Marinobacter nauticus (strain ATCC 700491 / DSM 11845 / VT8) (Marinobacter aquaeolei).